The primary structure comprises 360 residues: WAT1-related protein At3g28070 (360 aa).

A run of 10 helical transmembrane segments spans residues 15-35 (AVFLTAMLVVETSVVGISTLF), 45-65 (IYPFLGYSYLLASLLLLPSLF), 84-104 (IGLLGFLGSMYVITGYIGIEY), 108-128 (TLASAINNITPALTFILAIIF), 140-160 (SLAKLMGTILSLIGALVVIFY), 190-210 (WLIGGALLTMQGIFVSVSFIL), 224-244 (VSFLYTVCVSIVTSTIGLVVE), 248-268 (PSVWIIHFDITLITIVTMAIV), 286-306 (LYLAIFKPLSILIAVVMGAIF), and 311-331 (LYLGCLIGGILITLGFYAVMW). The EamA domain maps to 30-158 (GISTLFKFAT…LSLIGALVVI (129 aa)).

It belongs to the drug/metabolite transporter (DMT) superfamily. Plant drug/metabolite exporter (P-DME) (TC 2.A.7.4) family.

The protein localises to the membrane. The protein is WAT1-related protein At3g28070 of Arabidopsis thaliana (Mouse-ear cress).